Here is a 326-residue protein sequence, read N- to C-terminus: N-acetyl-gamma-glutamyl-phosphate reductase (326 aa).

Cys155 is a catalytic residue.

It belongs to the NAGSA dehydrogenase family. Type 1 subfamily.

Its subcellular location is the cytoplasm. The catalysed reaction is N-acetyl-L-glutamate 5-semialdehyde + phosphate + NADP(+) = N-acetyl-L-glutamyl 5-phosphate + NADPH + H(+). Its pathway is amino-acid biosynthesis; L-arginine biosynthesis; N(2)-acetyl-L-ornithine from L-glutamate: step 3/4. Functionally, catalyzes the NADPH-dependent reduction of N-acetyl-5-glutamyl phosphate to yield N-acetyl-L-glutamate 5-semialdehyde. This chain is N-acetyl-gamma-glutamyl-phosphate reductase, found in Shewanella woodyi (strain ATCC 51908 / MS32).